The chain runs to 171 residues: MVVAVYPGTFDPLTRGHEDLVRRASSIFDTLVVGVADSRNKKPFFTLEERLDIAHEVLGHYPNVQVMSFKGLLKDFVRTNNARVIVRGLRAVSDFEYEFQMAGMNRYLLPDVETMFMTPSDQYQFISGTIVREIAQLGGDVSKFVFPSVEKWLTEKVAAMDPASGASAGQP.

Residue Thr-9 coordinates substrate. ATP-binding positions include 9 to 10 (TF) and His-17. Substrate is bound by residues Lys-41, Leu-73, and Arg-87. ATP-binding positions include 88-90 (GLR), Glu-98, and 123-129 (YQFISGT).

It belongs to the bacterial CoaD family. In terms of assembly, homohexamer. It depends on Mg(2+) as a cofactor.

The protein resides in the cytoplasm. It catalyses the reaction (R)-4'-phosphopantetheine + ATP + H(+) = 3'-dephospho-CoA + diphosphate. It participates in cofactor biosynthesis; coenzyme A biosynthesis; CoA from (R)-pantothenate: step 4/5. Functionally, reversibly transfers an adenylyl group from ATP to 4'-phosphopantetheine, yielding dephospho-CoA (dPCoA) and pyrophosphate. The protein is Phosphopantetheine adenylyltransferase of Paraburkholderia phytofirmans (strain DSM 17436 / LMG 22146 / PsJN) (Burkholderia phytofirmans).